We begin with the raw amino-acid sequence, 78 residues long: Large ribosomal subunit protein bL28 (78 aa).

Residues 1–21 (MSRVCQVTGKSPITGNNVSHA) are disordered. Polar residues predominate over residues 8-21 (TGKSPITGNNVSHA).

It belongs to the bacterial ribosomal protein bL28 family.

The sequence is that of Large ribosomal subunit protein bL28 from Hahella chejuensis (strain KCTC 2396).